Reading from the N-terminus, the 290-residue chain is 33 kDa chaperonin (290 aa).

Cystine bridges form between cysteine 235–cysteine 237 and cysteine 268–cysteine 271.

This sequence belongs to the HSP33 family. Post-translationally, under oxidizing conditions two disulfide bonds are formed involving the reactive cysteines. Under reducing conditions zinc is bound to the reactive cysteines and the protein is inactive.

The protein localises to the cytoplasm. Its function is as follows. Redox regulated molecular chaperone. Protects both thermally unfolding and oxidatively damaged proteins from irreversible aggregation. Plays an important role in the bacterial defense system toward oxidative stress. This Streptococcus gordonii (strain Challis / ATCC 35105 / BCRC 15272 / CH1 / DL1 / V288) protein is 33 kDa chaperonin.